A 215-amino-acid chain; its full sequence is Nucleoside triphosphate pyrophosphatase (215 aa).

Aspartate 77 acts as the Proton acceptor in catalysis.

Belongs to the Maf family. A divalent metal cation is required as a cofactor.

Its subcellular location is the cytoplasm. The enzyme catalyses a ribonucleoside 5'-triphosphate + H2O = a ribonucleoside 5'-phosphate + diphosphate + H(+). The catalysed reaction is a 2'-deoxyribonucleoside 5'-triphosphate + H2O = a 2'-deoxyribonucleoside 5'-phosphate + diphosphate + H(+). Its function is as follows. Nucleoside triphosphate pyrophosphatase. May have a dual role in cell division arrest and in preventing the incorporation of modified nucleotides into cellular nucleic acids. This chain is Nucleoside triphosphate pyrophosphatase, found in Rickettsia africae (strain ESF-5).